A 142-amino-acid polypeptide reads, in one-letter code: Large ribosomal subunit protein uL11 (142 aa).

It belongs to the universal ribosomal protein uL11 family. In terms of assembly, part of the ribosomal stalk of the 50S ribosomal subunit. Interacts with L10 and the large rRNA to form the base of the stalk. L10 forms an elongated spine to which L12 dimers bind in a sequential fashion forming a multimeric L10(L12)X complex. Post-translationally, one or more lysine residues are methylated.

Forms part of the ribosomal stalk which helps the ribosome interact with GTP-bound translation factors. This Alcanivorax borkumensis (strain ATCC 700651 / DSM 11573 / NCIMB 13689 / SK2) protein is Large ribosomal subunit protein uL11.